We begin with the raw amino-acid sequence, 207 residues long: MKLKELESCLQQVDGFEEPKILLEQYPTSPHIAGCMLYTIHNTFDDIQNKLVADLGCGCGVLSIGAAVLDAGLCVGFDIDEDALDIFRGNVEEFELPNIDVVQCDVCSIGSSYAKKFDTVIMNPPFGTKHNQGIDMQFLQTAISMATSAVYSLHKTSTRDHIQKKANDWKVKMEVIAELRYDLPASYKFHKKKSVDIQVDFIRFTPT.

S-adenosyl-L-methionine contacts are provided by residues Gln25, Thr28, Gly56, Cys59, Val61, Asp78, and 105–106 (DV).

Belongs to the methyltransferase superfamily. PrmA family.

The protein resides in the nucleus. Its subcellular location is the presynapse. It localises to the postsynapse. It carries out the reaction adenosine(1832) in 18S rRNA + S-adenosyl-L-methionine = N(6)-methyladenosine(1832) in 18S rRNA + S-adenosyl-L-homocysteine + H(+). Its activity is regulated as follows. rRNA N6-adenosine-methyltransferase activity is inhibited by zinc. Functionally, catalytic subunit of a heterodimer with TRMT112, which specifically methylates the 6th position of adenine in position 1832 of 18S rRNA. N6-methylation of adenine(1832) in 18S rRNA resides in the decoding center of 18S rRNA and is required for translation and embryonic stem cells (ESCs) pluripotency and differentiation. The polypeptide is rRNA N(6)-adenosine-methyltransferase METTL5 (Danio rerio (Zebrafish)).